A 549-amino-acid chain; its full sequence is Zinc finger protein 18 (549 aa).

Positions 41 to 123 (RQLFRQFRYQ…TLVESLKGDP (83 aa)) constitute an SCAN box domain. One can recognise a KRAB domain in the interval 211–283 (DLGASLLPAA…YLHVNEKIPR (73 aa)). C2H2-type zinc fingers lie at residues 408 to 430 (PTCR…QRTH), 436 to 458 (FQCT…QRTH), 464 to 486 (CKCD…EKIH), 492 to 514 (YKCP…QRVH), and 520 to 542 (YKCS…QRSH).

This sequence belongs to the krueppel C2H2-type zinc-finger protein family.

The protein resides in the nucleus. Its function is as follows. May be involved in transcriptional regulation. This is Zinc finger protein 18 (ZNF18) from Homo sapiens (Human).